We begin with the raw amino-acid sequence, 345 residues long: Ubiquitin-associated domain-containing protein 2 (345 aa).

The N-terminal stretch at 1-35 is a signal peptide; that stretch reads MFTSTGSSGLYKAPLSKSLLLVPSALSLLLALLLP. Topologically, residues 36-91 are extracellular; it reads HCQKLFVYDLHAVKNDFQIWRLICGRIICLDLKDTFCSSLLIYNFRIFERRYGSRK. A helical membrane pass occupies residues 92 to 112; that stretch reads FASFLLGSWVLSALFDFLLVE. Residues 113 to 125 lie on the Cytoplasmic side of the membrane; that stretch reads AMQYFFGITAASN. Residues 126 to 146 form a helical membrane-spanning segment; sequence LPSGFLAPVFALFVPFYCSIP. Over 147–163 the chain is Extracellular; the sequence is RVQVAQILGPLSITNKT. The N-linked (GlcNAc...) asparagine glycan is linked to Asn-161. A helical transmembrane segment spans residues 164–184; the sequence is LIYILGLQLFTSGSYIWIVAI. At 185–345 the chain is on the cytoplasmic side; that stretch reads SGLMSGLCYN…NVATNFLLQH (161 aa). In terms of domain architecture, UBA spans 305-345; the sequence is EVSEEQVARLMEMGFSRGDALEALRASNNDLNVATNFLLQH.

In terms of assembly, interacts with LMBR1L, FAF2, AMFR and VCP.

It localises to the endoplasmic reticulum membrane. In terms of biological role, restricts trafficking of FAF2 from the endoplasmic reticulum to lipid droplets. In association with LMBR1L and E3 ubiquitin-protein ligase AMFR, negatively regulates the canonical Wnt signaling pathway in the lymphocytes by promoting the ubiquitin-mediated degradation of CTNNB1 and Wnt receptors FZD6 and LRP6. The polypeptide is Ubiquitin-associated domain-containing protein 2 (UBAC2) (Macaca fascicularis (Crab-eating macaque)).